We begin with the raw amino-acid sequence, 671 residues long: DNA ligase (671 aa).

Residues 38 to 42 (DKEFD), 87 to 88 (SL), and E113 each bind NAD(+). K115 functions as the N6-AMP-lysine intermediate in the catalytic mechanism. The NAD(+) site is built by R136, E170, K282, and K306. Residues C396, C399, C414, and C419 each contribute to the Zn(2+) site. In terms of domain architecture, BRCT spans 586–671 (SDLQPFVGQS…LLKQEGIAID (86 aa)).

The protein belongs to the NAD-dependent DNA ligase family. LigA subfamily. The cofactor is Mg(2+). Mn(2+) serves as cofactor.

The catalysed reaction is NAD(+) + (deoxyribonucleotide)n-3'-hydroxyl + 5'-phospho-(deoxyribonucleotide)m = (deoxyribonucleotide)n+m + AMP + beta-nicotinamide D-nucleotide.. Functionally, DNA ligase that catalyzes the formation of phosphodiester linkages between 5'-phosphoryl and 3'-hydroxyl groups in double-stranded DNA using NAD as a coenzyme and as the energy source for the reaction. It is essential for DNA replication and repair of damaged DNA. The protein is DNA ligase of Leptospira biflexa serovar Patoc (strain Patoc 1 / Ames).